The following is a 178-amino-acid chain: MSRIGNKVITLPAGVEIINKDNVVTVKGPKGELTREFNKNIGITVEGTEVTVTRPNDSKEMKTIHGTTRANLNNMVVGVSEGFKKALEMRGVGYRAQLQGSKLVLSVGKSHQDEVEAPEGVTFEVPTPTTINVIGINKESVGQTAAYVRSLRSPEPYKGKGIRYVGEFVRRKEGKTGK.

The protein belongs to the universal ribosomal protein uL6 family. Part of the 50S ribosomal subunit.

This protein binds to the 23S rRNA, and is important in its secondary structure. It is located near the subunit interface in the base of the L7/L12 stalk, and near the tRNA binding site of the peptidyltransferase center. The polypeptide is Large ribosomal subunit protein uL6 (Streptococcus agalactiae serotype Ia (strain ATCC 27591 / A909 / CDC SS700)).